Consider the following 339-residue polypeptide: UDP-N-acetylglucosamine--N-acetylmuramyl-(pentapeptide) pyrophosphoryl-undecaprenol N-acetylglucosamine transferase (339 aa).

UDP-N-acetyl-alpha-D-glucosamine contacts are provided by residues 11-13, Asn127, Arg170, Ser188, Ile235, and Gln280; that span reads TGG.

It belongs to the glycosyltransferase 28 family. MurG subfamily.

Its subcellular location is the cell inner membrane. It catalyses the reaction di-trans,octa-cis-undecaprenyl diphospho-N-acetyl-alpha-D-muramoyl-L-alanyl-D-glutamyl-meso-2,6-diaminopimeloyl-D-alanyl-D-alanine + UDP-N-acetyl-alpha-D-glucosamine = di-trans,octa-cis-undecaprenyl diphospho-[N-acetyl-alpha-D-glucosaminyl-(1-&gt;4)]-N-acetyl-alpha-D-muramoyl-L-alanyl-D-glutamyl-meso-2,6-diaminopimeloyl-D-alanyl-D-alanine + UDP + H(+). The protein operates within cell wall biogenesis; peptidoglycan biosynthesis. Its function is as follows. Cell wall formation. Catalyzes the transfer of a GlcNAc subunit on undecaprenyl-pyrophosphoryl-MurNAc-pentapeptide (lipid intermediate I) to form undecaprenyl-pyrophosphoryl-MurNAc-(pentapeptide)GlcNAc (lipid intermediate II). The chain is UDP-N-acetylglucosamine--N-acetylmuramyl-(pentapeptide) pyrophosphoryl-undecaprenol N-acetylglucosamine transferase from Thermotoga sp. (strain RQ2).